A 451-amino-acid polypeptide reads, in one-letter code: MERFAVILAAGKGTRMKSKLYKVLHPVLGKPMVEHVVDQLDQIGVSRQIVIVGHGAEAVQDTLGTRVEYAVQEEQLGTGHAVQMAEAELAGKSGATLVVCGDTPLLTAETLEALLAHHEAQQAKVTVLTAIADDATGYGRVVRGEDGNVTKVVEHKDASEAELAINEINTGTYVFDNELLFDALKQVGNNNAQGEYYLPDVISIAKEAGEVVAAHTAPTFDETIGVNDRVALSQAEAIMRKRTNERLMREGVTFMDPASTYISPDVVIGSDTVIYPGTVILGKTTIGSECVIGPNSDIRNSVIEDHAVVRQSVVTDSRIGEAAQVGPFAHLRQQAVLGANTRVGNFVEIKKSTFGDGAKASHLSYIGDASIGERVNLGCGSITVNYDGKNKFETVVEDDAFVGCNVNLIAPVKVGKGAIVAAGSTITSDVPEEALAIARERQTNKEGYTKR.

A pyrophosphorylase region spans residues 1-229; sequence MERFAVILAA…FDETIGVNDR (229 aa). Residues 8–11, Lys-22, Gln-72, and 77–78 contribute to the UDP-N-acetyl-alpha-D-glucosamine site; these read LAAG and GT. A Mg(2+)-binding site is contributed by Asp-102. Gly-139, Glu-154, Asn-169, and Asn-227 together coordinate UDP-N-acetyl-alpha-D-glucosamine. Asn-227 contributes to the Mg(2+) binding site. The tract at residues 230 to 250 is linker; that stretch reads VALSQAEAIMRKRTNERLMRE. The interval 251–451 is N-acetyltransferase; the sequence is GVTFMDPAST…QTNKEGYTKR (201 aa). UDP-N-acetyl-alpha-D-glucosamine-binding residues include Arg-332 and Lys-350. The active-site Proton acceptor is His-362. UDP-N-acetyl-alpha-D-glucosamine contacts are provided by Tyr-365 and Asn-376. Residues 385-386, Ala-422, and Arg-439 each bind acetyl-CoA; that span reads NY.

It in the N-terminal section; belongs to the N-acetylglucosamine-1-phosphate uridyltransferase family. This sequence in the C-terminal section; belongs to the transferase hexapeptide repeat family. In terms of assembly, homotrimer. Mg(2+) serves as cofactor.

The protein resides in the cytoplasm. It carries out the reaction alpha-D-glucosamine 1-phosphate + acetyl-CoA = N-acetyl-alpha-D-glucosamine 1-phosphate + CoA + H(+). The enzyme catalyses N-acetyl-alpha-D-glucosamine 1-phosphate + UTP + H(+) = UDP-N-acetyl-alpha-D-glucosamine + diphosphate. It participates in nucleotide-sugar biosynthesis; UDP-N-acetyl-alpha-D-glucosamine biosynthesis; N-acetyl-alpha-D-glucosamine 1-phosphate from alpha-D-glucosamine 6-phosphate (route II): step 2/2. The protein operates within nucleotide-sugar biosynthesis; UDP-N-acetyl-alpha-D-glucosamine biosynthesis; UDP-N-acetyl-alpha-D-glucosamine from N-acetyl-alpha-D-glucosamine 1-phosphate: step 1/1. Its pathway is bacterial outer membrane biogenesis; LPS lipid A biosynthesis. Its function is as follows. Catalyzes the last two sequential reactions in the de novo biosynthetic pathway for UDP-N-acetylglucosamine (UDP-GlcNAc). The C-terminal domain catalyzes the transfer of acetyl group from acetyl coenzyme A to glucosamine-1-phosphate (GlcN-1-P) to produce N-acetylglucosamine-1-phosphate (GlcNAc-1-P), which is converted into UDP-GlcNAc by the transfer of uridine 5-monophosphate (from uridine 5-triphosphate), a reaction catalyzed by the N-terminal domain. The protein is Bifunctional protein GlmU of Exiguobacterium sp. (strain ATCC BAA-1283 / AT1b).